A 364-amino-acid chain; its full sequence is Dual-specificity RNA methyltransferase RlmN (364 aa).

The active-site Proton acceptor is Glu91. Residues Glu97–Asp333 form the Radical SAM core domain. A disulfide bond links Cys104 and Cys338. Cys111, Cys115, and Cys118 together coordinate [4Fe-4S] cluster. S-adenosyl-L-methionine is bound by residues Gly164–Glu165, Ser196, Ser218–His220, and Asn295. Cys338 acts as the S-methylcysteine intermediate in catalysis.

It belongs to the radical SAM superfamily. RlmN family. The cofactor is [4Fe-4S] cluster.

The protein resides in the cytoplasm. The catalysed reaction is adenosine(2503) in 23S rRNA + 2 reduced [2Fe-2S]-[ferredoxin] + 2 S-adenosyl-L-methionine = 2-methyladenosine(2503) in 23S rRNA + 5'-deoxyadenosine + L-methionine + 2 oxidized [2Fe-2S]-[ferredoxin] + S-adenosyl-L-homocysteine. It catalyses the reaction adenosine(37) in tRNA + 2 reduced [2Fe-2S]-[ferredoxin] + 2 S-adenosyl-L-methionine = 2-methyladenosine(37) in tRNA + 5'-deoxyadenosine + L-methionine + 2 oxidized [2Fe-2S]-[ferredoxin] + S-adenosyl-L-homocysteine. Functionally, specifically methylates position 2 of adenine 2503 in 23S rRNA and position 2 of adenine 37 in tRNAs. m2A2503 modification seems to play a crucial role in the proofreading step occurring at the peptidyl transferase center and thus would serve to optimize ribosomal fidelity. The protein is Dual-specificity RNA methyltransferase RlmN of Neisseria meningitidis serogroup A / serotype 4A (strain DSM 15465 / Z2491).